Reading from the N-terminus, the 464-residue chain is Fumarate hydratase class II (464 aa).

Substrate is bound by residues 98-100 (SGT), 129-132 (HPND), 139-141 (SSN), and T187. The active-site Proton donor/acceptor is H188. S318 is an active-site residue. Substrate is bound by residues S319 and 324 to 326 (KVN).

Belongs to the class-II fumarase/aspartase family. Fumarase subfamily. In terms of assembly, homotetramer.

It is found in the cytoplasm. It carries out the reaction (S)-malate = fumarate + H2O. It functions in the pathway carbohydrate metabolism; tricarboxylic acid cycle; (S)-malate from fumarate: step 1/1. In terms of biological role, involved in the TCA cycle. Catalyzes the stereospecific interconversion of fumarate to L-malate. This is Fumarate hydratase class II from Haemophilus ducreyi (strain 35000HP / ATCC 700724).